The chain runs to 182 residues: Adenine phosphoribosyltransferase (182 aa).

The protein belongs to the purine/pyrimidine phosphoribosyltransferase family. In terms of assembly, homodimer.

It localises to the cytoplasm. It catalyses the reaction AMP + diphosphate = 5-phospho-alpha-D-ribose 1-diphosphate + adenine. It participates in purine metabolism; AMP biosynthesis via salvage pathway; AMP from adenine: step 1/1. Its function is as follows. Catalyzes a salvage reaction resulting in the formation of AMP, that is energically less costly than de novo synthesis. The chain is Adenine phosphoribosyltransferase from Ectopseudomonas mendocina (strain ymp) (Pseudomonas mendocina).